A 450-amino-acid polypeptide reads, in one-letter code: Exodeoxyribonuclease 7 large subunit (450 aa).

Belongs to the XseA family. Heterooligomer composed of large and small subunits.

Its subcellular location is the cytoplasm. The enzyme catalyses Exonucleolytic cleavage in either 5'- to 3'- or 3'- to 5'-direction to yield nucleoside 5'-phosphates.. Functionally, bidirectionally degrades single-stranded DNA into large acid-insoluble oligonucleotides, which are then degraded further into small acid-soluble oligonucleotides. The protein is Exodeoxyribonuclease 7 large subunit of Listeria welshimeri serovar 6b (strain ATCC 35897 / DSM 20650 / CCUG 15529 / CIP 8149 / NCTC 11857 / SLCC 5334 / V8).